The chain runs to 312 residues: uncharacterized protein (312 aa).

This is an uncharacterized protein from Saccharomyces cerevisiae (strain ATCC 204508 / S288c) (Baker's yeast).